The chain runs to 312 residues: MINREDLLKNPVEDITLSDLKKYNDIVSVFDKIYGFSSEGIVNGSKILKEMIKNADLRFLSFTANLVSTGLRGLFADLIKKGYFNIVVTTGGTIDHDLARSFGGVYYKGSFDIDDTMLKDLEIHRLGNVLVPFESYGKVIEDVVRKFLPEITKDRKEISAYELLWEFGKRITDSNSILRAAYDKNVPIIVPGILDGSFGTNLFIQSQFLNFRINLFEDMRLIKDLIFSSKKSGALIIGGGISKHHTIWWNQFKDGLNYAIYITTAQEYDGSLSGAKPREAISWNKIRPDAKHVTIYGDATIIVPILAASLLS.

Lys285 (nucleophile) is an active-site residue.

This sequence belongs to the deoxyhypusine synthase family. The cofactor is NAD(+).

It catalyses the reaction [eIF5A protein]-L-lysine + spermidine = [eIF5A protein]-deoxyhypusine + propane-1,3-diamine. The protein operates within protein modification; eIF5A hypusination. Its function is as follows. Catalyzes the NAD-dependent oxidative cleavage of spermidine and the subsequent transfer of the butylamine moiety of spermidine to the epsilon-amino group of a specific lysine residue of the eIF-5A precursor protein to form the intermediate deoxyhypusine residue. This is Probable deoxyhypusine synthase (dys) from Saccharolobus solfataricus (strain ATCC 35092 / DSM 1617 / JCM 11322 / P2) (Sulfolobus solfataricus).